Consider the following 185-residue polypeptide: Elongation factor P (185 aa).

It belongs to the elongation factor P family.

Its subcellular location is the cytoplasm. Its pathway is protein biosynthesis; polypeptide chain elongation. In terms of biological role, involved in peptide bond synthesis. Stimulates efficient translation and peptide-bond synthesis on native or reconstituted 70S ribosomes in vitro. Probably functions indirectly by altering the affinity of the ribosome for aminoacyl-tRNA, thus increasing their reactivity as acceptors for peptidyl transferase. The chain is Elongation factor P from Limosilactobacillus reuteri (strain DSM 20016) (Lactobacillus reuteri).